Consider the following 596-residue polypeptide: Elongation factor 4 (596 aa).

In terms of domain architecture, tr-type G spans 2–183 (KNIRNFSIIA…TIITKIPAPK (182 aa)). Residues 14–19 (DHGKST) and 130–133 (NKID) each bind GTP.

Belongs to the TRAFAC class translation factor GTPase superfamily. Classic translation factor GTPase family. LepA subfamily.

It localises to the cell inner membrane. It catalyses the reaction GTP + H2O = GDP + phosphate + H(+). In terms of biological role, required for accurate and efficient protein synthesis under certain stress conditions. May act as a fidelity factor of the translation reaction, by catalyzing a one-codon backward translocation of tRNAs on improperly translocated ribosomes. Back-translocation proceeds from a post-translocation (POST) complex to a pre-translocation (PRE) complex, thus giving elongation factor G a second chance to translocate the tRNAs correctly. Binds to ribosomes in a GTP-dependent manner. The chain is Elongation factor 4 from Campylobacter lari (strain RM2100 / D67 / ATCC BAA-1060).